The following is a 424-amino-acid chain: 26S proteasome regulatory subunit 6A homolog A (424 aa).

The interval 1-21 (MATPMVEDTSSFEEDQLASMS) is disordered. A2 carries the post-translational modification N-acetylalanine. S19 carries the post-translational modification Phosphoserine. ATP is bound at residue 212 to 219 (GPPGTGKT). K235 participates in a covalent cross-link: Glycyl lysine isopeptide (Lys-Gly) (interchain with G-Cter in ubiquitin). T278 is subject to O-acetylthreonine. Glycyl lysine isopeptide (Lys-Gly) (interchain with G-Cter in ubiquitin) cross-links involve residues K279 and K416.

It belongs to the AAA ATPase family. In terms of assembly, component of the 19S regulatory particle (RP/PA700) base subcomplex of the 26S proteasome. The 26S proteasome is composed of a core protease (CP), known as the 20S proteasome, capped at one or both ends by the 19S regulatory particle (RP/PA700). The RP/PA700 complex is composed of at least 17 different subunits in two subcomplexes, the base and the lid, which form the portions proximal and distal to the 20S proteolytic core, respectively. In terms of tissue distribution, ubiquitous.

Its subcellular location is the cytoplasm. It localises to the nucleus. The 26S proteasome is involved in the ATP-dependent degradation of ubiquitinated proteins. The regulatory (or ATPase) complex confers ATP dependency and substrate specificity to the 26S complex. Interacts with transit peptides of proteins targeted to the chloroplast, and may be involved in the degradation of unimported plastid protein precursors. Plays a essential role in the gametophyte development. Involved in tolerance to zinc deficiency, possibly through alleviation of oxidative stresses or processing of poly-ubiquitinated proteins. This chain is 26S proteasome regulatory subunit 6A homolog A, found in Arabidopsis thaliana (Mouse-ear cress).